The following is a 544-amino-acid chain: MSKEIKFGNDSRSKMLNGVNILADAVKITLGPKGRNVVIDKSYGAPQITKDGVTVAKEIELEDKFENMGAQMVKDVASQTNDAAGDGTTTATVLAQAIIADGLKAVAAGMNPMDLKRGIDQTVKAAVAELKKLSTPCSDSKAITQVGTISANSDHEIGEIIAQAMQKVGNQGVITVEEGQGLETELDVVEGMQFDRGYLSPYFMTNHESGTVELENPYILLVDKKIGNIRELLPTLEAVAKASKPLLIIAEDVEGEALATLVVNNMRGIVKVCAVKAPGFGDRRKAMLQDIATLTGGTVISEEIGLDMEKVQLEDLGQAKRVVINKDETTIIDGIGDESVINARVSQIKQQIEASTSDYDKEKLQERSAKLAGGVAVIKVGASTEVEMKEKKDRVDDALHATRAAVEEGVVAGGGVALVRVAAILKGLTGENEDQNVGIRVALRAMEAPLRQIVENCGEEASVVANNVRQGEGNYGYNATTGEYGDMLEMGIIDPTKVARSALQFAASVAALMITTECMITDRPVAASAAAPDMGGMGGMGGMM.

ATP-binding positions include Thr29 to Pro32, Lys50, Asp86 to Thr90, Gly414, and Asp494.

The protein belongs to the chaperonin (HSP60) family. As to quaternary structure, forms a cylinder of 14 subunits composed of two heptameric rings stacked back-to-back. Interacts with the co-chaperonin GroES.

The protein localises to the cytoplasm. The catalysed reaction is ATP + H2O + a folded polypeptide = ADP + phosphate + an unfolded polypeptide.. Functionally, together with its co-chaperonin GroES, plays an essential role in assisting protein folding. The GroEL-GroES system forms a nano-cage that allows encapsulation of the non-native substrate proteins and provides a physical environment optimized to promote and accelerate protein folding. The polypeptide is Chaperonin GroEL 1 (Psychromonas ingrahamii (strain DSM 17664 / CCUG 51855 / 37)).